Consider the following 321-residue polypeptide: Porin Omp2a (321 aa).

The first 22 residues, 1–22 (MNIKSLLLGSAAALVAASGAQA), serve as a signal peptide directing secretion.

The protein belongs to the alphaproteobacteria porin family. In terms of assembly, monomer.

Its subcellular location is the cell outer membrane. Functionally, forms passive diffusion pores that allow small molecular weight hydrophilic materials across the outer membrane. This is Porin Omp2a (omp2a) from Brucella abortus (strain S19).